We begin with the raw amino-acid sequence, 62 residues long: Large ribosomal subunit protein uL30 (62 aa).

Belongs to the universal ribosomal protein uL30 family. In terms of assembly, part of the 50S ribosomal subunit.

This chain is Large ribosomal subunit protein uL30, found in Ruegeria pomeroyi (strain ATCC 700808 / DSM 15171 / DSS-3) (Silicibacter pomeroyi).